Consider the following 247-residue polypeptide: Uridylate kinase (247 aa).

ATP is bound at residue 16-19; that stretch reads KLSG. A UMP-binding site is contributed by Gly-58. Gly-59 and Arg-63 together coordinate ATP. UMP contacts are provided by residues Asp-78 and 139–146; that span reads TGNPFFTT. The ATP site is built by Thr-166, Tyr-172, and Asp-175.

The protein belongs to the UMP kinase family. As to quaternary structure, homohexamer.

It is found in the cytoplasm. It catalyses the reaction UMP + ATP = UDP + ADP. The protein operates within pyrimidine metabolism; CTP biosynthesis via de novo pathway; UDP from UMP (UMPK route): step 1/1. With respect to regulation, inhibited by UTP. Its function is as follows. Catalyzes the reversible phosphorylation of UMP to UDP. This is Uridylate kinase from Xylella fastidiosa (strain 9a5c).